Here is a 468-residue protein sequence, read N- to C-terminus: ATP synthase subunit beta (468 aa).

Residue 155-162 (GGAGVGKT) participates in ATP binding.

Belongs to the ATPase alpha/beta chains family. As to quaternary structure, F-type ATPases have 2 components, CF(1) - the catalytic core - and CF(0) - the membrane proton channel. CF(1) has five subunits: alpha(3), beta(3), gamma(1), delta(1), epsilon(1). CF(0) has three main subunits: a(1), b(2) and c(9-12). The alpha and beta chains form an alternating ring which encloses part of the gamma chain. CF(1) is attached to CF(0) by a central stalk formed by the gamma and epsilon chains, while a peripheral stalk is formed by the delta and b chains.

It localises to the cell membrane. The enzyme catalyses ATP + H2O + 4 H(+)(in) = ADP + phosphate + 5 H(+)(out). Its function is as follows. Produces ATP from ADP in the presence of a proton gradient across the membrane. The catalytic sites are hosted primarily by the beta subunits. The sequence is that of ATP synthase subunit beta from Streptococcus pyogenes serotype M6 (strain ATCC BAA-946 / MGAS10394).